A 1960-amino-acid chain; its full sequence is [F-actin]-monooxygenase MICAL3 (1960 aa).

The tract at residues 2–494 (EESKNEATNR…RHLYDTGDTK (493 aa)) is monooxygenase domain. FAD contacts are provided by residues cysteine 97, 116–118 (EKR), 123–125 (RNN), phenylalanine 183, tyrosine 298, and aspartate 398. The 107-residue stretch at 518-624 (VARSSKLLGW…YLTQFYEMFK (107 aa)) folds into the Calponin-homology (CH) domain. At serine 649 the chain carries Phosphoserine. A disordered region spans residues 658–704 (GQTISRKRSPKDKKEKDLDGAGKRRKTSQSEEEDTPRGHRGARPTLV). A compositionally biased stretch (basic and acidic residues) spans 669-679 (DKKEKDLDGAG). A phosphoserine mark is found at serine 685 and serine 687. The LIM zinc-binding domain maps to 762–824 (DTCYFCQKRV…KPHYCYRLSG (63 aa)). 8 residues coordinate Zn(2+): cysteine 764, cysteine 767, histidine 785, cysteine 788, cysteine 791, cysteine 794, cysteine 814, and histidine 817. Disordered regions lie at residues 826–887 (AQRK…LRGT) and 906–1295 (LEEV…EALK). Threonine 887 carries the phosphothreonine modification. Phosphoserine is present on serine 971. A compositionally biased stretch (acidic residues) spans 984–1014 (GEEEEEDEEDEEEEEEEEDEEDEEEDEDESS). Basic and acidic residues-rich tracts occupy residues 1039–1051 (HWTHIRESQEERA) and 1072–1084 (DVDSEPAEIKGEA). A phosphoserine mark is found at serine 1129, serine 1139, serine 1156, and serine 1188. Pro residues-rich tracts occupy residues 1192–1203 (SPLPEPSTPPAE) and 1217–1233 (RTPPSPASPQRPSPPTQ). Phosphoserine is present on serine 1250. Threonine 1252 is subject to Phosphothreonine. A phosphoserine mark is found at serine 1254, serine 1286, and serine 1313. Residues 1277-1286 (QGVTKDTLGS) are compositionally biased toward polar residues. Disordered regions lie at residues 1316–1550 (LTPV…KRGL) and 1564–1782 (RMRA…EEEL). Threonine 1317 is modified (phosphothreonine). The segment covering 1379-1393 (PDREPKGPREEHRDL) has biased composition (basic and acidic residues). Over residues 1394 to 1406 (SSSSGLGLQGSSS) the composition is skewed to low complexity. At serine 1404 the chain carries Phosphoserine. The segment covering 1407–1425 (RTRTPGSQSFNTSDSTMLT) has biased composition (polar residues). A Phosphothreonine modification is found at threonine 1425. Residues 1485–1503 (SVDEIPFADDVEDTYDDNT) show a composition bias toward acidic residues. A compositionally biased stretch (low complexity) spans 1594-1611 (AAAAPRTPRTPAPRRATA). The segment covering 1616–1627 (GPEEPAPRHEAT) has biased composition (basic and acidic residues). Residues 1633-1653 (SPPSDSGGPDGSVTSSEGSSG) show a composition bias toward low complexity. The span at 1654 to 1672 (KSKKRSSLFSPRRSKKEKK) shows a compositional bias: basic residues. Phosphoserine occurs at positions 1660 and 1663. Residues 1718-1727 (CPSTPSSGTT) are compositionally biased toward polar residues. The segment covering 1762–1778 (VLERTSQKSRKEPRTYT) has biased composition (basic and acidic residues). The stretch at 1779 to 1952 (EEELNAKLTR…DKDLEAAMLS (174 aa)) forms a coiled coil. One can recognise a bMERB domain in the interval 1799–1948 (KQEELKRLHR…EKEEDKDLEA (150 aa)). Serine 1870 carries the phosphoserine modification.

Belongs to the Mical family. Interacts with RAB1B, RAB8A, RAB10, RAB13 and RAB15 (in their GTP-bound forms); binding to RAB1B is of low affinity compared to other Rab proteins; at least in case of RAB8A can bind 2 molecules of RAB8A simultaneously through a high and a low affinity binding site, respectively. Interacts with ERC1 and RAB8A; may bridge ERC1 with RAB8A. Interacts with KIF23 and ERC1; enhances the interaction between KIF23 and ERC1. Interacts with NINL. Requires FAD as cofactor.

The protein resides in the cytoplasm. Its subcellular location is the cell cortex. The protein localises to the cytoskeleton. It localises to the nucleus. It is found in the midbody. The protein resides in the spindle. Its subcellular location is the cilium basal body. The enzyme catalyses L-methionyl-[F-actin] + NADPH + O2 + H(+) = L-methionyl-(R)-S-oxide-[F-actin] + NADP(+) + H2O. Monooxygenase that promotes depolymerization of F-actin by mediating oxidation of specific methionine residues on actin to form methionine-sulfoxide, resulting in actin filament disassembly and preventing repolymerization. In the absence of actin, it also functions as a NADPH oxidase producing H(2)O(2). Seems to act as Rab effector protein and play a role in vesicle trafficking. Involved in exocytic vesicles tethering and fusion: the monooxygenase activity is required for this process and implicates RAB8A associated with exocytotic vesicles. Required for cytokinesis. Contributes to stabilization and/or maturation of the intercellular bridge independently of its monooxygenase activity. Promotes recruitment of Rab8 and ERC1 to the intercellular bridge, and together these proteins are proposed to function in timely abscission. This is [F-actin]-monooxygenase MICAL3 (MICAL3) from Bos taurus (Bovine).